A 454-amino-acid polypeptide reads, in one-letter code: MQAELVIKNGLVILETGEVITDVAVQGGKIVAIGQDLSGERVIDATGLVVSPGMVDAHVHITDPGGGYRDEWEGYVTGTAACAKGGVTTFMEMPLNQIPATVDKTSLEIKYKAGENKLKVDVGSFGGVVPTNLADGIQELDEGGVSGYKCFLGTCGDRSIEGDFQNVDDYSLYEGMKQVAKTGKVLAIHAENAPITDKLGAVAYQNGETTLAAYVATRPVFTEVEAIQKAILFAKETGCRIHICHVACQEGVEEVLKAQAEGVDVTCETCTHYLYFTTDELDAIGPVVKCSPPIRDADQQAALWNHVQTGGIAFVTSDHSPCTPDLKDTTNAFEAWGGISGVQNNVDVLFDEAVQKRGLSLKQFADMIAANPADRYHLAQKGRISIGKDADFVLIKPNAPYILKAEDLEYRNKISPYIGREIGAQVIQTILRGETIYAQETGVTEAFNGVFIKN.

H58, H60, K149, H189, H245, and D318 together coordinate Zn(2+). K149 carries the post-translational modification N6-carboxylysine.

Belongs to the metallo-dependent hydrolases superfamily. Allantoinase family. As to quaternary structure, homotetramer. Zn(2+) is required as a cofactor. In terms of processing, carboxylation allows a single lysine to coordinate two zinc ions.

It carries out the reaction (S)-allantoin + H2O = allantoate + H(+). The protein operates within nitrogen metabolism; (S)-allantoin degradation; allantoate from (S)-allantoin: step 1/1. Its function is as follows. Catalyzes the conversion of allantoin (5-ureidohydantoin) to allantoic acid by hydrolytic cleavage of the five-member hydantoin ring. The sequence is that of Allantoinase from Enterococcus faecalis (strain ATCC 700802 / V583).